Reading from the N-terminus, the 150-residue chain is MSKIAIFPGSFDPFTKGHEDIVRRSLPLFDKVIIAIGNNAQKNRYFEIDYIIPKIESCFEKTDNVEVKVFKGLTAEFAKESGAQFLIRGLRNTTDFEYENSISQANKYLWKDLETVFMITSPHLAYISSSLIRDIHKYDGDVSGFLPYKI.

S10 is a binding site for substrate. ATP is bound by residues 10 to 11 (SF) and H18. Residues K42, T74, and R88 each contribute to the substrate site. Residues 89–91 (GLR), E99, and 124–130 (LAYISSS) each bind ATP.

Belongs to the bacterial CoaD family. As to quaternary structure, homohexamer. It depends on Mg(2+) as a cofactor.

Its subcellular location is the cytoplasm. It catalyses the reaction (R)-4'-phosphopantetheine + ATP + H(+) = 3'-dephospho-CoA + diphosphate. The protein operates within cofactor biosynthesis; coenzyme A biosynthesis; CoA from (R)-pantothenate: step 4/5. Reversibly transfers an adenylyl group from ATP to 4'-phosphopantetheine, yielding dephospho-CoA (dPCoA) and pyrophosphate. The protein is Phosphopantetheine adenylyltransferase of Cytophaga hutchinsonii (strain ATCC 33406 / DSM 1761 / CIP 103989 / NBRC 15051 / NCIMB 9469 / D465).